A 337-amino-acid chain; its full sequence is DNA-directed RNA polymerase subunit alpha (337 aa).

The interval 1-231 (MRNITTSAYT…KQLSVFDKIT (231 aa)) is alpha N-terminal domain (alpha-NTD). Residues 247–337 (ENTKLLQNIT…IAELKAQNEG (91 aa)) form an alpha C-terminal domain (alpha-CTD) region.

Belongs to the RNA polymerase alpha chain family. As to quaternary structure, homodimer. The RNAP catalytic core consists of 2 alpha, 1 beta, 1 beta' and 1 omega subunit. When a sigma factor is associated with the core the holoenzyme is formed, which can initiate transcription.

The enzyme catalyses RNA(n) + a ribonucleoside 5'-triphosphate = RNA(n+1) + diphosphate. DNA-dependent RNA polymerase catalyzes the transcription of DNA into RNA using the four ribonucleoside triphosphates as substrates. This is DNA-directed RNA polymerase subunit alpha from Campylobacter jejuni subsp. jejuni serotype O:2 (strain ATCC 700819 / NCTC 11168).